Consider the following 228-residue polypeptide: Ferric nitrobindin-like protein (228 aa).

A disordered region spans residues 1 to 21 (MTSDEVRDGAGSPADSSKGNK). Residues 75–81 (GVWRGEG) carry the GXWXGXG motif.

The protein belongs to the nitrobindin family.

The chain is Ferric nitrobindin-like protein from Mycobacterium leprae (strain TN).